Reading from the N-terminus, the 322-residue chain is Nodulation protein Z (322 aa).

The 314-residue stretch at 1–314 folds into the GT23 domain; that stretch reads MYNRYVLSRR…NDPSRLVVIE (314 aa).

Belongs to the glycosyltransferase 23 family.

Fucosyltransferase which adds the fucose moiety of the nod factor on its terminal reducing N-acetylglucosamine end. Uses GDP-fucose as the donor group. The sequence is that of Nodulation protein Z (nodZ) from Sinorhizobium fredii (strain NBRC 101917 / NGR234).